Reading from the N-terminus, the 325-residue chain is Probable isoaspartyl peptidase/L-asparaginase GA20639 (325 aa).

The Nucleophile role is filled by Thr184. Substrate is bound by residues 212–215 (RIGD) and 235–238 (TGHG).

The protein belongs to the Ntn-hydrolase family. In terms of assembly, heterodimer of an alpha and beta chain produced by autocleavage. In terms of processing, cleaved into an alpha and beta chain by autocatalysis; this activates the enzyme. The N-terminal residue of the beta subunit is responsible for the nucleophile hydrolase activity.

The enzyme catalyses L-asparagine + H2O = L-aspartate + NH4(+). The catalysed reaction is Cleavage of a beta-linked Asp residue from the N-terminus of a polypeptide.. In terms of biological role, has both L-asparaginase and beta-aspartyl peptidase activity. Does not have aspartylglucosaminidase activity and is inactive toward GlcNAc-L-Asn. Likewise, has no activity toward glutamine. In Drosophila pseudoobscura pseudoobscura (Fruit fly), this protein is Probable isoaspartyl peptidase/L-asparaginase GA20639.